A 165-amino-acid polypeptide reads, in one-letter code: Dihydrofolate reductase (165 aa).

Residues 3–165 (VVGLIWAQST…RYRLHSYHRS (163 aa)) form the DHFR domain. Residue 7 to 9 (IWA) participates in substrate binding. Residues 8–9 (WA) and 16–21 (IGRDGG) contribute to the NADP(+) site. Residue D29 coordinates substrate. An NADP(+)-binding site is contributed by 45–48 (GRRT). Substrate is bound at residue R62. NADP(+)-binding positions include 67-70 (LSRQ) and 100-105 (IGGEQI). T119 contributes to the substrate binding site.

Belongs to the dihydrofolate reductase family.

The enzyme catalyses (6S)-5,6,7,8-tetrahydrofolate + NADP(+) = 7,8-dihydrofolate + NADPH + H(+). The protein operates within cofactor biosynthesis; tetrahydrofolate biosynthesis; 5,6,7,8-tetrahydrofolate from 7,8-dihydrofolate: step 1/1. In terms of biological role, key enzyme in folate metabolism. Catalyzes an essential reaction for de novo glycine and purine synthesis, and for DNA precursor synthesis. The polypeptide is Dihydrofolate reductase (folA) (Mycobacterium leprae (strain TN)).